The sequence spans 34 residues: Stromal 70 kDa heat shock-related protein, chloroplastic (34 aa).

This sequence belongs to the heat shock protein 70 family.

It localises to the plastid. It is found in the chloroplast stroma. Its function is as follows. Interacts with newly imported chloroplast proteins to assist in their maturation. This chain is Stromal 70 kDa heat shock-related protein, chloroplastic, found in Cucurbita maxima (Pumpkin).